A 954-amino-acid chain; its full sequence is ATPase 9, plasma membrane-type (954 aa).

Over 1–66 (MAGNKDSSWD…EKKENKVLKF (66 aa)) the chain is Cytoplasmic. Residues 67-86 (LGFMWNPLSWVMELAAIMAI) form a helical membrane-spanning segment. Residues 87–98 (ALANGGGRPPDW) are Extracellular-facing. Residues 99-119 (QDFVGITVLLIINSTISFIEE) traverse the membrane as a helical segment. Residues 120–248 (NNAGNAAAAL…GHFQKVLTAI (129 aa)) lie on the Cytoplasmic side of the membrane. The helical transmembrane segment at 249 to 269 (GNFCICSIAIGMLIEIVVMYP) threads the bilayer. Residues 270-278 (IQKRAYRDG) lie on the Extracellular side of the membrane. A helical transmembrane segment spans residues 279-296 (IDNLLVLLIGGIPIAMPT). The Cytoplasmic segment spans residues 297 to 648 (VLSVTMAIGS…TSRAIFQRMK (352 aa)). The 4-aspartylphosphate intermediate role is filled by Asp334. Residues Asp593 and Asp597 each coordinate Mg(2+). The chain crosses the membrane as a helical span at residues 649–670 (NYTIYAVSITIRIVMGFMLLAL). Residues 671 to 675 (IWKFD) lie on the Extracellular side of the membrane. A helical membrane pass occupies residues 676-698 (FSPFMVLIVAILNDGTIMTISKD). The Cytoplasmic segment spans residues 699 to 714 (RVKPSPLPDSWKLKEI). A helical membrane pass occupies residues 715 to 735 (FATGVVLGTYLAVMTVVFFWA). The Extracellular segment spans residues 736 to 756 (AESTDFFSAKFGVRSISGNPH). Residues 757 to 777 (ELTAAVYLQVSIVSQALIFVT) form a helical membrane-spanning segment. The Cytoplasmic segment spans residues 778 to 789 (RSRSWSYVERPG). Residues 790–810 (FWLISAFFMAQLIATLIAVYA) form a helical membrane-spanning segment. Topologically, residues 811 to 818 (NWNFARIR) are extracellular. Residues 819 to 839 (GIGWGWAGVIWLYSIVFYIPL) traverse the membrane as a helical segment. Topologically, residues 840 to 954 (DILKFIIRYS…IEAIQQHYTL (115 aa)) are cytoplasmic. Phosphothreonine is present on Thr886. The residue at position 936 (Ser936) is a Phosphoserine. The interaction with 14-3-3 proteins stretch occupies residues 952 to 954 (YTL). A Phosphothreonine modification is found at Thr953.

Belongs to the cation transport ATPase (P-type) (TC 3.A.3) family. Type IIIA subfamily. In terms of assembly, binds to 14-3-3 proteins. The binding is induced by phosphorylation of Thr-953. Binding to 14-3-3 proteins activates the H(+)-ATPase. In terms of tissue distribution, anther specific. Expressed in guard cells.

It localises to the membrane. The enzyme catalyses ATP + H2O + H(+)(in) = ADP + phosphate + 2 H(+)(out). Its function is as follows. The plasma membrane H(+) ATPase of plants and fungi generates a proton gradient that drives the active transport of nutrients by H(+)-symport. The resulting external acidification and/or internal alkinization may mediate growth responses. This chain is ATPase 9, plasma membrane-type (AHA9), found in Arabidopsis thaliana (Mouse-ear cress).